Here is a 315-residue protein sequence, read N- to C-terminus: Deoxyhypusine hydroxylase (315 aa).

HEAT-like PBS-type repeat units lie at residues 23 to 52 (IAKR…LNDK), 56 to 82 (LRHE…LVKN), 89 to 115 (VRHE…YSND), 179 to 205 (NRYR…GLKD), 211 to 237 (LRHE…CVLD), and 244 to 270 (VRHE…LLQD). The Fe cation site is built by histidine 58, histidine 91, and glutamate 92. Fe cation is bound by residues histidine 213, histidine 246, and glutamate 247.

Belongs to the deoxyhypusine hydroxylase family. Fe(2+) serves as cofactor.

The catalysed reaction is [eIF5A protein]-deoxyhypusine + AH2 + O2 = [eIF5A protein]-hypusine + A + H2O. The protein operates within protein modification; eIF5A hypusination. Its function is as follows. Catalyzes the hydroxylation of the N(6)-(4-aminobutyl)-L-lysine intermediate produced by deoxyhypusine synthase/DHPS on a critical lysine of the eukaryotic translation initiation factor 5A/eIF-5A. This is the second step of the post-translational modification of that lysine into an unusual amino acid residue named hypusine. Hypusination is unique to mature eIF-5A factor and is essential for its function. This is Deoxyhypusine hydroxylase (dohh-1) from Dictyostelium discoideum (Social amoeba).